The chain runs to 233 residues: Rano class II histocompatibility antigen, A beta chain (233 aa).

Residues 1–80 (DFVYQFKGLC…DTVCRYNYEE (80 aa)) form a beta-1 region. Over 1–194 (DFVYQFKGLC…RAQSESAQSK (194 aa)) the chain is Extracellular. Asn-14 carries an N-linked (GlcNAc...) asparagine glycan. Residues 81-184 (TEVPTSLRRL…SLESPVTVEW (104 aa)) form a beta-2 region. The Ig-like C1-type domain maps to 93–181 (PNVAISLSRT…DHASLESPVT (89 aa)). Positions 185–194 (RAQSESAQSK) are connecting peptide. The helical transmembrane segment at 195–215 (MLSGIGGLVLGVIFLGLGLFI) threads the bilayer. Over 216–233 (RHKRQKGPQGPPPAGLLQ) the chain is Cytoplasmic.

The protein belongs to the MHC class II family.

It localises to the membrane. Involved in the presentation of foreign antigens to the immune system. The protein is Rano class II histocompatibility antigen, A beta chain (RT1-B) of Rattus norvegicus (Rat).